We begin with the raw amino-acid sequence, 133 residues long: Small ribosomal subunit protein uS9 (133 aa).

Residues 102 to 113 show a composition bias toward basic and acidic residues; sequence KVEGYLSRDPRA. The interval 102–133 is disordered; sequence KVEGYLSRDPRAKERRKYGLKKARKAPQFSKR. Positions 114-133 are enriched in basic residues; the sequence is KERRKYGLKKARKAPQFSKR.

It belongs to the universal ribosomal protein uS9 family.

The chain is Small ribosomal subunit protein uS9 from Gloeobacter violaceus (strain ATCC 29082 / PCC 7421).